A 229-amino-acid chain; its full sequence is Ribonuclease HII (229 aa).

In terms of domain architecture, RNase H type-2 spans 34–223 (WPVAGADEAG…LRKSEDGPEM (190 aa)). A divalent metal cation-binding residues include D40, E41, and D131. The disordered stretch occupies residues 209 to 229 (MSFRPLRKSEDGPEMDELIPE). Positions 220 to 229 (GPEMDELIPE) are enriched in acidic residues.

The protein belongs to the RNase HII family. Requires Mn(2+) as cofactor. It depends on Mg(2+) as a cofactor.

It localises to the cytoplasm. It catalyses the reaction Endonucleolytic cleavage to 5'-phosphomonoester.. Endonuclease that specifically degrades the RNA of RNA-DNA hybrids. This chain is Ribonuclease HII, found in Rhizobium etli (strain CIAT 652).